The chain runs to 893 residues: Alanine--tRNA ligase (893 aa).

Zn(2+)-binding residues include H573, H577, C676, and H680. The disordered stretch occupies residues 853–872 (LGGGGGGKDDLAQGGGQDPS).

Belongs to the class-II aminoacyl-tRNA synthetase family. It depends on Zn(2+) as a cofactor.

The protein resides in the cytoplasm. The catalysed reaction is tRNA(Ala) + L-alanine + ATP = L-alanyl-tRNA(Ala) + AMP + diphosphate. Catalyzes the attachment of alanine to tRNA(Ala) in a two-step reaction: alanine is first activated by ATP to form Ala-AMP and then transferred to the acceptor end of tRNA(Ala). Also edits incorrectly charged Ser-tRNA(Ala) and Gly-tRNA(Ala) via its editing domain. The sequence is that of Alanine--tRNA ligase from Kineococcus radiotolerans (strain ATCC BAA-149 / DSM 14245 / SRS30216).